A 253-amino-acid chain; its full sequence is Pre-mRNA-splicing factor SPF27 homolog (253 aa).

The stretch at 124–235 (KQYLQKNQRS…IDSFKKEAAE (112 aa)) forms a coiled coil.

The protein belongs to the SPF27 family. In terms of assembly, component of the multiprotein assembly MOS4-associated complex (MAC) at least composed of MOS4, CDC5 and PRL1. Interacts with CYCL1-1 and CDC5. Associated with the spliceosome. Interacts with ENY2.

The protein localises to the nucleus. Component of the MAC complex that probably regulates defense responses through transcriptional control and thereby is essential for plant innate immunity. Involved in mRNA splicing. This Arabidopsis thaliana (Mouse-ear cress) protein is Pre-mRNA-splicing factor SPF27 homolog (MOS4).